We begin with the raw amino-acid sequence, 276 residues long: Short-chain dehydrogenase/reductase ATR10 (276 aa).

Residues Ile-29, Ser-51, Asp-78, and Asn-105 each coordinate NADP(+). The active-site Proton donor is the Ser-161. Lys-185 and Thr-214 together coordinate NADP(+). Catalysis depends on Lys-185, which acts as the Lowers pKa of active site Tyr.

Belongs to the short-chain dehydrogenases/reductases (SDR) family.

It participates in mycotoxin biosynthesis. Short-chain dehydrogenase/reductase; part of the core atranone cluster (CAC) which products are predicted to catalyze most or all steps of mycotoxin atranone synthesis, starting from geranylgeranyl pyrophosphate (GGPP). The initial cyclization of GGPP to dolabellane is probably performed by the terpene cyclase ATR13. The Baeyer-Villiger oxidation near the end of the atranone synthesis, which converts atranones D and E to atranones F and G is predicted to be catalyzed by the monooxygenase ATR8. Of the CAC's other predicted gene products, the reducing PKS ATR6 might synthesize a polyketide chain. This polyketide is probably transferred onto the atranone backbone by the polyketide transferase ATR5. Other predicted CAC products include 4 oxygenases (ATR2, ATR3, ATR4, and ATR14), 3 short-chain reductases (ATR7, ATR9, and ATR10), and a methyltransferase (ATR12). These may all be involved in the various steps of atranone biosynthesis, although their specific roles must await experimental determination. This chain is Short-chain dehydrogenase/reductase ATR10, found in Stachybotrys chlorohalonatus (strain IBT 40285).